A 177-amino-acid polypeptide reads, in one-letter code: Translationally-controlled tumor protein homolog (177 aa).

The 177-residue stretch at 1–177 folds into the TCTP domain; the sequence is MIIYRDLFSG…IKQGLVVEKC (177 aa).

It belongs to the TCTP family.

It localises to the cytoplasm. In terms of biological role, involved in calcium binding and microtubule stabilization. This is Translationally-controlled tumor protein homolog from Trichinella pseudospiralis (Parasitic roundworm).